We begin with the raw amino-acid sequence, 413 residues long: Elongation factor 1-alpha (413 aa).

One can recognise a tr-type G domain in the interval 5–211 (KTHMNLAFIG…DALDEPDKPV (207 aa)). A G1 region spans residues 14-21 (GHVDHGKS). Position 14 to 21 (14 to 21 (GHVDHGKS)) interacts with GTP. Residue serine 21 coordinates Mg(2+). The tract at residues 60-64 (GVTID) is G2. Residues 81-84 (DCPG) form a G3 region. GTP is bound by residues 81-85 (DCPGH) and 136-139 (NKMD). Residues 136–139 (NKMD) form a G4 region. The interval 175 to 177 (SAF) is G5.

It belongs to the TRAFAC class translation factor GTPase superfamily. Classic translation factor GTPase family. EF-Tu/EF-1A subfamily.

It localises to the cytoplasm. It carries out the reaction GTP + H2O = GDP + phosphate + H(+). GTP hydrolase that promotes the GTP-dependent binding of aminoacyl-tRNA to the A-site of ribosomes during protein biosynthesis. The polypeptide is Elongation factor 1-alpha (Methanosphaera stadtmanae (strain ATCC 43021 / DSM 3091 / JCM 11832 / MCB-3)).